A 328-amino-acid chain; its full sequence is Beta-ketoacyl-[acyl-carrier-protein] synthase III (328 aa).

Active-site residues include cysteine 113 and histidine 252. Residues 253-257 (QANLR) form an ACP-binding region. Asparagine 282 is a catalytic residue.

The protein belongs to the thiolase-like superfamily. FabH family. In terms of assembly, homodimer.

The protein localises to the cytoplasm. It carries out the reaction malonyl-[ACP] + acetyl-CoA + H(+) = 3-oxobutanoyl-[ACP] + CO2 + CoA. Its pathway is lipid metabolism; fatty acid biosynthesis. Its function is as follows. Catalyzes the condensation reaction of fatty acid synthesis by the addition to an acyl acceptor of two carbons from malonyl-ACP. Catalyzes the first condensation reaction which initiates fatty acid synthesis and may therefore play a role in governing the total rate of fatty acid production. Possesses both acetoacetyl-ACP synthase and acetyl transacylase activities. Its substrate specificity determines the biosynthesis of branched-chain and/or straight-chain of fatty acids. The chain is Beta-ketoacyl-[acyl-carrier-protein] synthase III from Campylobacter fetus subsp. fetus (strain 82-40).